Reading from the N-terminus, the 495-residue chain is MADRNLRDLLAPWVQNVPARALREMVLDSRVAASGDLFVAVVGHQADGRRYIPQAIAQGVAAIIAEAKDDATDGEIREMHGVPVIYLSQLNERLSALAGRFYHEPSDQLRLVGVTGTNGKTTTTQLMAQWAQLLGETGAVMGTVGNGLLGKVNPTENTTGSAVDVQHVLSGLAGQGATFAAMEVSSHGLVQHRVSALKFAASVFTNLSRDHLDYHGDMENYEAAKWLLYSTHHCGQAIINADDEVGRRWLAKLPDAVAVSMEDHINPNCHGRWLKATDVDYHDSGATIRFASSWGEGEIESRLMGAFNVSNLLLALATLLALDYPLSELVNTGARLQPVCGRMEVFTAPGKPTVVVDYAHTPDALEKALQAARLHCTGKLWCVFGCGGDRDKGKRPLMGAIAEQFADIPVVTDDNPRTEEPRAIINDILAGMMDAGHARVVEGRAEAVTNAIMQAKENDVVLLAGKGHEDYQIVGAHRLDYSDRVTAARLLGALA.

UDP-N-acetyl-alpha-D-muramoyl-L-alanyl-D-glutamate is bound by residues Leu-27, Ser-29, and 44–46; that span reads HQA. 116 to 122 is an ATP binding site; that stretch reads GTNGKTT. UDP-N-acetyl-alpha-D-muramoyl-L-alanyl-D-glutamate contacts are provided by residues Asn-157, 158 to 159, Ser-185, Gln-191, and Arg-193; that span reads TT. The residue at position 225 (Lys-225) is an N6-carboxylysine. Meso-2,6-diaminopimelate contacts are provided by residues Arg-390, 414–417, Gly-465, and Glu-469; that span reads DNPR. Positions 414-417 match the Meso-diaminopimelate recognition motif motif; sequence DNPR.

The protein belongs to the MurCDEF family. MurE subfamily. Mg(2+) serves as cofactor. In terms of processing, carboxylation is probably crucial for Mg(2+) binding and, consequently, for the gamma-phosphate positioning of ATP.

It is found in the cytoplasm. It carries out the reaction UDP-N-acetyl-alpha-D-muramoyl-L-alanyl-D-glutamate + meso-2,6-diaminopimelate + ATP = UDP-N-acetyl-alpha-D-muramoyl-L-alanyl-gamma-D-glutamyl-meso-2,6-diaminopimelate + ADP + phosphate + H(+). The protein operates within cell wall biogenesis; peptidoglycan biosynthesis. Catalyzes the addition of meso-diaminopimelic acid to the nucleotide precursor UDP-N-acetylmuramoyl-L-alanyl-D-glutamate (UMAG) in the biosynthesis of bacterial cell-wall peptidoglycan. The chain is UDP-N-acetylmuramoyl-L-alanyl-D-glutamate--2,6-diaminopimelate ligase from Enterobacter sp. (strain 638).